Here is a 586-residue protein sequence, read N- to C-terminus: Putative butyrophilin subfamily 2 member A3 (586 aa).

The first 27 residues, 1-27 (MEPAAALHFSRPASLLLLLSLCALVSA), serve as a signal peptide directing secretion. An Ig-like V-type domain is found at 28–139 (QVTVVGPTDP…SCNEAILHLV (112 aa)). At 28–246 (QVTVVGPTDP…SFMPSRSPCV (219 aa)) the chain is on the extracellular side. N-linked (GlcNAc...) asparagine glycans are attached at residues Asn45, Asn112, Asn214, and Asn220. A disulfide bridge links Cys50 with Cys123. The chain crosses the membrane as a helical span at residues 247–267 (VILPVIMIILMIPIAICIYWI). The Cytoplasmic segment spans residues 268–586 (NNLQKEKKDS…VPQLPARKKV (319 aa)). One can recognise a B30.2/SPRY domain in the interval 281-474 (TFNLCLSLAG…ILICSAFTGA (194 aa)).

This sequence belongs to the immunoglobulin superfamily. BTN/MOG family.

It is found in the membrane. The chain is Putative butyrophilin subfamily 2 member A3 (BTN2A3P) from Homo sapiens (Human).